The following is a 636-amino-acid chain: Chaperone protein HtpG (636 aa).

The a; substrate-binding stretch occupies residues 1–329; sequence MSKEHGAAAE…TEDLPLNISR (329 aa). The b stretch occupies residues 330–550; the sequence is ETLQENALIA…DGGMTASMEK (221 aa). The c stretch occupies residues 551–636; the sequence is LMRVMNKDES…TGWYAEVRKL (86 aa).

Belongs to the heat shock protein 90 family. In terms of assembly, homodimer.

Its subcellular location is the cytoplasm. In terms of biological role, molecular chaperone. Has ATPase activity. The chain is Chaperone protein HtpG from Oleidesulfovibrio alaskensis (strain ATCC BAA-1058 / DSM 17464 / G20) (Desulfovibrio alaskensis).